A 722-amino-acid polypeptide reads, in one-letter code: Solute carrier organic anion transporter family member 4C1 (722 aa).

The segment at 1–81 (MQGSKGIENP…PGSQLSELEE (81 aa)) is disordered. The Cytoplasmic portion of the chain corresponds to 1 to 101 (MQGSKGIENP…QCLQRCNTPQ (101 aa)). Phosphoserine occurs at positions 15 and 16. The residue at position 19 (Thr-19) is a Phosphothreonine. A phosphoserine mark is found at Ser-24, Ser-26, and Ser-28. Polar residues predominate over residues 25-46 (ASPSQVEVSAVASRNQNGGSQP). A helical transmembrane segment spans residues 102–122 (GFLLHYCLLALTQGIVVNGLV). Residues 123–141 (NISISTIEKRYEMKSSLTG) lie on the Extracellular side of the membrane. A helical membrane pass occupies residues 142-162 (LISSSYDISFCVLSLFVSFFG). Residues 163–168 (ERGHKP) are Cytoplasmic-facing. Residues 169–193 (RWLAFASFMIGLGALVFSLPHFFSG) form a helical membrane-spanning segment. At 194–218 (RYELGSIFEDTCLTRNSTRCSSSTS) the chain is on the extracellular side. A helical transmembrane segment spans residues 219-249 (LLSNYFYVFVLGQLLLGTGGTPLYTLGTAFI). The Cytoplasmic segment spans residues 250–269 (DDSVPTHKSSLYIGIGYSMS). A helical transmembrane segment spans residues 270-290 (ILGPAIGYVLGGQLLTMYIDI). Residues 291 to 306 (AMGQSSDLTEDDPRWL) lie on the Extracellular side of the membrane. Residues 307-331 (GAWWIGFLLAWLFAWSLIMPFSCFP) form a helical membrane-spanning segment. Over 332 to 376 (KHLPGTAKIQAGKTSQTHQNNSTSFQHTDENFGKSIKDFPTAVKN) the chain is Cytoplasmic. Residues 377–398 (LMRNTVFICLVLSTTSEALITT) form a helical membrane-spanning segment. At 399–418 (GFATFLPKFIENQFGLTSSF) the chain is on the extracellular side. The chain crosses the membrane as a helical span at residues 419 to 442 (AATLGGAVLIPGAALGQILGGVLV). At 443-446 (SKFK) the chain is on the cytoplasmic side. Residues 447–470 (MKCKNTMKFALCTSGVALVLSFVF) form a helical membrane-spanning segment. The Extracellular portion of the chain corresponds to 471–578 (IYAKCENEPF…RTRCSNLPIF (108 aa)). One can recognise a Kazal-like domain in the interval 494–549 (GNLTAPCNANCNCLRSYYYPLCGSDGIQYFSPCFAGCLNSVSNRKPKVYYNCSCIE). Disulfide bonds link Cys-500–Cys-530, Cys-506–Cys-526, and Cys-515–Cys-547. A helical membrane pass occupies residues 579–601 (LGIFFITVIFTFMAGTPITVSIL). The Cytoplasmic segment spans residues 602–610 (RCVNHRHRS). A helical membrane pass occupies residues 611–636 (LALGVQFMLLRLLGTIPGPIIFGVII). Topologically, residues 637–670 (DSTCVLWDVNECGIKGACWIYDNIKMAHMLVAIS) are extracellular. The chain crosses the membrane as a helical span at residues 671–688 (VTCKVITIFFNGLAIVLY). Over 689–722 (KPPPPGTEVSFQSQNVIVSTISVEEDLDKAENEG) the chain is Cytoplasmic.

This sequence belongs to the organo anion transporter (TC 2.A.60) family. In terms of tissue distribution, strongly expressed in initial segment of epididymis and seminal vesicles.

It localises to the basolateral cell membrane. The catalysed reaction is estrone 3-sulfate(out) = estrone 3-sulfate(in). The enzyme catalyses L-thyroxine(out) = L-thyroxine(in). It catalyses the reaction 3,3',5-triiodo-L-thyronine(out) = 3,3',5-triiodo-L-thyronine(in). It carries out the reaction chenodeoxycholate(out) = chenodeoxycholate(in). The catalysed reaction is glycocholate(out) = glycocholate(in). The enzyme catalyses L-homoarginine(in) = L-homoarginine(out). It catalyses the reaction L-arginine(in) = L-arginine(out). It carries out the reaction N(omega),N(omega)-dimethyl-L-arginine(out) = N(omega),N(omega)-dimethyl-L-arginine(in). In terms of biological role, mediates the transport of organic anions such as steroids (estrone 3-sulfate, chenodeoxycholate, glycocholate) and thyroid hormones (3,3',5-triiodo-L-thyronine (T3), L-thyroxine (T4)), in the kidney. Capable of transporting cAMP and pharmacological substances such as digoxin, ouabain and methotrexate. Transport is independent of sodium, chloride ion, and ATP. Transport activity is stimulated by an acidic extracellular environment due to increased substrate affinity to the transporter. The driving force for this transport activity is currently not known. The role of hydrogencarbonate (HCO3(-), bicarbonate) as the probable counteranion that exchanges for organic anions is still not well defined. Functions as an uptake transporter at the apical membrane, suggesting a role in renal reabsorption. Involved in the renal secretion of the uremic toxin ADMA (N(omega),N(omega)-dimethyl-L-arginine or asymmetrical dimethylarginine), which is associated to cardiovascular events and mortality, and the structurally related amino acids L-arginine and L-homoarginine (a cardioprotective biomarker). Can act bidirectionally, suggesting a dual protective role of this transport protein; exporting L-homoarginine after being synthesized in proximal tubule cells, and mediating uptake of ADMA from the blood into proximal tubule cells where it is degraded by the enzyme dimethylarginine dimethylaminohydrolase 1 (DDAH1). May be involved in sperm maturation by enabling directed movement of organic anions and compounds within or between cells. This ion-transporting process is important to maintain the strict epididymal homeostasis necessary for sperm maturation. May have a role in secretory functions since seminal vesicle epithelial cells are assumed to secrete proteins involved in decapacitation by modifying surface proteins to facilitate the acquisition of the ability to fertilize the egg. This is Solute carrier organic anion transporter family member 4C1 from Mus musculus (Mouse).